The following is a 417-amino-acid chain: WAT1-related protein At3g02690, chloroplastic (417 aa).

The transit peptide at 1 to 68 (MEWPWSAIAA…RRINGDSVVR (68 aa)) directs the protein to the chloroplast. The tract at residues 67–92 (VRRSTTSNNSTEETESSSSSSSVDCV) is disordered. Residues 68-89 (RRSTTSNNSTEETESSSSSSSV) show a composition bias toward low complexity. A run of 10 helical transmembrane segments spans residues 122 to 142 (FLEW…MVAM), 152 to 172 (FFVA…FAVY), 183 to 203 (AWFS…GFLA), 213 to 233 (LGSV…SFLF), 237 to 257 (IGIV…LLEV), 269 to 289 (LWGS…IGTV), 301 to 321 (IMAT…ISVI), 339 to 359 (VIAL…VYFY), 369 to 389 (LSSL…LYLN), and 392 to 412 (FSSL…LVNF). 2 consecutive EamA domains span residues 133–255 (FFWG…LLLL) and 283–411 (SMAI…YLVN).

This sequence belongs to the drug/metabolite transporter (DMT) superfamily. Plant drug/metabolite exporter (P-DME) (TC 2.A.7.4) family.

The protein resides in the plastid. It localises to the chloroplast membrane. The chain is WAT1-related protein At3g02690, chloroplastic from Arabidopsis thaliana (Mouse-ear cress).